The primary structure comprises 92 residues: MIESEVIALVEKNEQTIKYTVSKDKKSVKEILEAVYEALSEKGYDPVNQIVGYILSGDPTYITSHKNARNLIRKIERDELVEELLKSYLSKE.

It belongs to the UPF0297 family.

This Caldanaerobacter subterraneus subsp. tengcongensis (strain DSM 15242 / JCM 11007 / NBRC 100824 / MB4) (Thermoanaerobacter tengcongensis) protein is UPF0297 protein TTE1249.